The following is a 428-amino-acid chain: Histidine--tRNA ligase (428 aa).

It belongs to the class-II aminoacyl-tRNA synthetase family.

It localises to the cytoplasm. The catalysed reaction is tRNA(His) + L-histidine + ATP = L-histidyl-tRNA(His) + AMP + diphosphate + H(+). The protein is Histidine--tRNA ligase of Korarchaeum cryptofilum (strain OPF8).